Consider the following 466-residue polypeptide: Ras-GEF domain-containing family member 1C (466 aa).

Residues 1 to 37 (MPQTLSASDMVTPGSLSPPPTEPTDGEQAGQPLLDGA) are disordered. The N-terminal Ras-GEF domain maps to 34–164 (LDGAPSSASL…LLQALHQKLA (131 aa)). The 247-residue stretch at 200–446 (DPYTLAQQLT…YLASYESESP (247 aa)) folds into the Ras-GEF domain.

Its function is as follows. Guanine nucleotide exchange factor (GEF). The sequence is that of Ras-GEF domain-containing family member 1C (RASGEF1C) from Homo sapiens (Human).